Reading from the N-terminus, the 524-residue chain is Acetyl-CoA decarbonylase/synthase complex subunit beta (524 aa).

[Ni-Fe-S] cluster-binding residues include Cys-212, Cys-215, Cys-301, and Cys-303. The tract at residues 436 to 466 (WVEEEEEEAEEVAEEAAAEAAPAAQPAQAAQ) is disordered. The span at 437–452 (VEEEEEEAEEVAEEAA) shows a compositional bias: acidic residues. The segment covering 453–466 (AEAAPAAQPAQAAQ) has biased composition (low complexity).

This sequence belongs to the CdhC family. Monomer. The ACDS complex is made up of alpha, epsilon, beta, gamma and delta chains with a probable stoichiometry of (alpha(2)epsilon(2))(4)-beta(8)-(gamma(1)delta(1))(8). [Ni-Fe-S] cluster is required as a cofactor.

It carries out the reaction Co(I)-[corrinoid Fe-S protein] + acetyl-CoA + H(+) = methyl-Co(III)-[corrinoid Fe-S protein] + CO + CoA. In terms of biological role, part of a complex that catalyzes the reversible cleavage of acetyl-CoA, allowing autotrophic growth from CO(2). The alpha-epsilon complex generates CO from CO(2), while the beta subunit (this protein) combines the CO with CoA and a methyl group to form acetyl-CoA. The methyl group, which is incorporated into acetyl-CoA, is transferred to the beta subunit by a corrinoid iron-sulfur protein (the gamma-delta complex). The polypeptide is Acetyl-CoA decarbonylase/synthase complex subunit beta (Archaeoglobus fulgidus (strain ATCC 49558 / DSM 4304 / JCM 9628 / NBRC 100126 / VC-16)).